The chain runs to 216 residues: Urease accessory protein UreG (216 aa).

GTP is bound at residue 25 to 32 (GPVGSGKT).

This sequence belongs to the SIMIBI class G3E GTPase family. UreG subfamily. Homodimer. UreD, UreF and UreG form a complex that acts as a GTP-hydrolysis-dependent molecular chaperone, activating the urease apoprotein by helping to assemble the nickel containing metallocenter of UreC. The UreE protein probably delivers the nickel.

It localises to the cytoplasm. Facilitates the functional incorporation of the urease nickel metallocenter. This process requires GTP hydrolysis, probably effectuated by UreG. The sequence is that of Urease accessory protein UreG from Burkholderia thailandensis (strain ATCC 700388 / DSM 13276 / CCUG 48851 / CIP 106301 / E264).